The chain runs to 336 residues: Glycerol-3-phosphate dehydrogenase [NAD(P)+] (336 aa).

NADPH is bound by residues S11, W12, and K106. Positions 106, 134, and 136 each coordinate sn-glycerol 3-phosphate. A138 lines the NADPH pocket. Sn-glycerol 3-phosphate contacts are provided by K189, D242, S252, R253, and N254. The active-site Proton acceptor is the K189. NADPH is bound at residue R253. NADPH contacts are provided by V277 and E279.

Belongs to the NAD-dependent glycerol-3-phosphate dehydrogenase family.

The protein localises to the cytoplasm. It carries out the reaction sn-glycerol 3-phosphate + NAD(+) = dihydroxyacetone phosphate + NADH + H(+). The enzyme catalyses sn-glycerol 3-phosphate + NADP(+) = dihydroxyacetone phosphate + NADPH + H(+). It participates in membrane lipid metabolism; glycerophospholipid metabolism. Catalyzes the reduction of the glycolytic intermediate dihydroxyacetone phosphate (DHAP) to sn-glycerol 3-phosphate (G3P), the key precursor for phospholipid synthesis. The polypeptide is Glycerol-3-phosphate dehydrogenase [NAD(P)+] (Agathobacter rectalis (strain ATCC 33656 / DSM 3377 / JCM 17463 / KCTC 5835 / VPI 0990) (Eubacterium rectale)).